A 479-amino-acid polypeptide reads, in one-letter code: Glutamate--tRNA ligase (479 aa).

Positions 11-21 match the 'HIGH' region motif; sequence PSPTGYLHIGG. 4 residues coordinate Zn(2+): cysteine 108, cysteine 110, cysteine 135, and glutamate 137. A 'KMSKS' region motif is present at residues 250-254; sequence KLSKR. An ATP-binding site is contributed by lysine 253.

It belongs to the class-I aminoacyl-tRNA synthetase family. Glutamate--tRNA ligase type 1 subfamily. Monomer. Zn(2+) is required as a cofactor.

It is found in the cytoplasm. The catalysed reaction is tRNA(Glu) + L-glutamate + ATP = L-glutamyl-tRNA(Glu) + AMP + diphosphate. In terms of biological role, catalyzes the attachment of glutamate to tRNA(Glu) in a two-step reaction: glutamate is first activated by ATP to form Glu-AMP and then transferred to the acceptor end of tRNA(Glu). This chain is Glutamate--tRNA ligase, found in Myxococcus xanthus (strain DK1622).